The primary structure comprises 127 residues: uncharacterized protein (127 aa).

2 consecutive transmembrane segments (helical) span residues 13–35 (ILLLISIFFLVCIISLVGIGIIF) and 57–81 (AVLIVLGVFAICFMIIQLVISIMIW).

It is found in the cell membrane. This is an uncharacterized protein from Mycoplasma genitalium (strain ATCC 33530 / DSM 19775 / NCTC 10195 / G37) (Mycoplasmoides genitalium).